Here is a 159-residue protein sequence, read N- to C-terminus: Urease accessory protein UreE (159 aa).

It belongs to the UreE family.

Its subcellular location is the cytoplasm. Functionally, involved in urease metallocenter assembly. Binds nickel. Probably functions as a nickel donor during metallocenter assembly. In Pseudomonas entomophila (strain L48), this protein is Urease accessory protein UreE.